A 307-amino-acid chain; its full sequence is Deaminated glutathione amidase, chloroplastic/cytosolic (307 aa).

A chloroplast-targeting transit peptide spans 1–36; sequence MNAYSVSLDFTKPSLFTRITLSSQIPLTMATTVNKT. The CN hydrolase domain occupies 37–286; sequence VRVAAAQMTS…TGIVVADIDF (250 aa). Residue Glu-76 is the Proton acceptor of the active site. Lys-147 acts as the Proton donor in catalysis. The Nucleophile role is filled by Cys-188.

The protein belongs to the nitrilase superfamily. NIT1/NIT2 family.

The protein localises to the plastid. It localises to the chloroplast. It is found in the cytoplasm. The catalysed reaction is N-(4-oxoglutaryl)-L-cysteinylglycine + H2O = L-cysteinylglycine + 2-oxoglutarate. The enzyme catalyses N-(4-carboxy-4-oxobutanoyl)-L-ethylglycylglycine + H2O = N-(2-aminobutanoyl)glycine + 2-oxoglutarate. Functionally, catalyzes the hydrolysis of the amide bond in N-(4-oxoglutarate)-L-cysteinylglycine (deaminated glutathione), a metabolite repair reaction to dispose of the harmful deaminated glutathione. Possesses amidase activity toward deaminated ophthalmate in vitro. This Arabidopsis thaliana (Mouse-ear cress) protein is Deaminated glutathione amidase, chloroplastic/cytosolic.